Here is a 350-residue protein sequence, read N- to C-terminus: Sulfate-binding protein (350 aa).

The signal sequence occupies residues 1-40 (MKTAWTRRSFLQSAALATATVITIAACGGNNQSSSGGSGQ).

This sequence belongs to the prokaryotic sulfate-binding protein family.

The protein localises to the periplasm. This protein specifically binds sulfate and is involved in its transmembrane transport. The protein is Sulfate-binding protein (sbpA) of Synechococcus elongatus (strain ATCC 33912 / PCC 7942 / FACHB-805) (Anacystis nidulans R2).